The chain runs to 745 residues: A-kinase anchor protein 5 (745 aa).

The segment at 1–121 (METSVSEIQV…KKKAKSRLKF (121 aa)) is disordered. The segment at 1-164 (METSVSEIQV…EIKAQTQPDD (164 aa)) is essential to the intracellular anchoring function. Residues S4 and S22 each carry the phosphoserine modification. Residue C36 is the site of S-palmitoyl cysteine attachment. Positions 37–50 (FKRRKKANKTKPKA) are enriched in basic residues. Basic and acidic residues-rich tracts occupy residues 54–63 (TAEETKKHTP) and 90–100 (SEPAKKQKPPE). An AKAP CaM-binding motif is present at residues 74–94 (AGAWASIKGLVTHRKRSEPAK). C123 carries the S-palmitoyl cysteine lipid modification. A compositionally biased stretch (polar residues) spans 162–175 (PDDQAIQAGSTQGL). 2 disordered regions span residues 162 to 195 (PDDQ…ISNS) and 215 to 392 (AIQM…DHTE). 2 stretches are compositionally biased toward basic and acidic residues: residues 180-189 (LVRDGKKSQE) and 222-231 (ELEKETKVIT). Over residues 234 to 268 (PSVQTQRASLLESSAAGSPRSVTSAAPPSPATTHQ) the composition is skewed to polar residues. The span at 285 to 300 (GKDDRRKTAAEEKKSG) shows a compositional bias: basic and acidic residues. Residues 304–312 (LGQAEEAAV) form a 1; approximate repeat. The tract at residues 304–628 (LGQAEEAAVG…PTVDQAEEAI (325 aa)) is 28 X 8 AA repeats of V-G-Q-A-E-E-A-T. The 2; approximate repeat unit spans residues 320 to 327 (LSQAGEAT). A 3; approximate repeat occupies 328–335 (AGHPEEAT). One copy of the 4; approximate repeat lies at 348 to 355 (LSQAEETT). A 5; approximate repeat occupies 356–363 (VAQAKETV). A 6; approximate repeat occupies 364-395 (LSQAKEGELSQAKKATVGQAEEATIDHTEKVT). The stretch at 420–436 (LSQAKEATVVGQAEEAT) is one 7; approximate repeat. The stretch at 445–452 (VGQAEEAT) is one 8; approximate repeat. 5 repeat units span residues 461–468 (VDQAEEAT), 469–476 (VGQAEEAT), 477–484 (VGQAEEAT), 485–492 (VDWAEKPT), and 493–500 (VGQAEEAT). The interval 466–560 (EATVGQAEEA…QAEEATVGQA (95 aa)) is disordered. Residues 501–508 (VGQAEEAT) form a 14; approximate repeat. One copy of the 15; approximate repeat lies at 517–524 (VDQAEEAT). Repeat copies occupy residues 525 to 532 (VGQAEEAT), 533 to 540 (VGHTEKVT), 541 to 548 (VDHAEEAT), and 549 to 556 (VGQAEEAT). Positions 535 to 546 (HTEKVTVDHAEE) are enriched in basic and acidic residues. A 20; approximate repeat occupies 557 to 564 (VGQAEKVT). Repeat unit 21 spans residues 565–572 (VDHAEEAT). The stretch at 573–580 (VGQAEEAT) is one 22; approximate repeat. One copy of the 23; approximate repeat lies at 581–588 (VGQAEKVT). The stretch at 589–596 (VDHAEEAT) is one 24; approximate repeat. The stretch at 597 to 604 (VGQAEEAT) is repeat 25. One copy of the 26; approximate repeat lies at 605-612 (VGQAEKVT). Residues 613-620 (VDQAEEPT) form a 27; approximate repeat. The interval 617 to 651 (EEPTVDQAEEAISSHAPDLKENGIDTEKPRSEESK) is disordered. The stretch at 621–628 (VDQAEEAI) is one 28; approximate repeat. Basic and acidic residues predominate over residues 633–651 (PDLKENGIDTEKPRSEESK). The segment at 706–727 (YETLLIETASSLVKNAIELSVE) is RII-beta subunit binding domain. The tract at residues 728–745 (QLVNEMVSEDNQINTLFQ) is tethers NFATC2 to CRAC channels.

As to quaternary structure, binding protein for dimer of the RII-beta regulatory subunit of cAMP-dependent protein kinase (PKA) and also for the protein kinase C (PKC) and the phosphatase calcineurin (PP2B). Each enzyme is inhibited when bound to the anchoring protein. Also binds the beta2-adrenergic receptor. Part of a complex containing AKAP5, ADCY5, ADCY6 and PDE4C. Interacts with ADCY8, and enhances its phosphorylation at lipid rafts. Interacts with ORAI1 (isoform alpha) (via N-terminus) upon store depletion and in response to LTC4. Does not interact with ORAI2 and ORAI3 paralogs. Interacts (via leucine zipper domain) with NFATC2/NFAT1. Interacts with calmodulin; the interaction is calcium-independent. Interacts with KCNQ2; the interaction may help KCNQ2 channel complex to retain calcium-bound calmodulin. Interacts with KCNK2; the channel is recruited to postsynaptic microdomains by AKAP5 where it can integrate neurotransmitter receptor signals. Part of a complex composed of AKAP5 and ADRB2. In terms of processing, palmitoylated. Palmitoylation at Cys-36 and Cys-123 play a key role in the targeting of AKAP5 to lipid rafts. Palmitoylation by ZDHHC2 is required for AKAP5 function in LTP-stimulated recycling endosome exocytosis.

It is found in the postsynaptic recycling endosome membrane. It localises to the cell projection. The protein localises to the dendrite. The protein resides in the postsynaptic cell membrane. Functionally, multivalent scaffold protein that anchors the cAMP-dependent protein kinase/PKA to cytoskeletal and/or organelle-associated proteins, targeting the signal carried by cAMP to specific intracellular effectors. Association with the beta2-adrenergic receptor (beta2-AR) not only regulates beta2-AR signaling pathway, but also the activation by PKA by switching off the beta2-AR signaling cascade. Plays a role in long term synaptic potentiation by regulating protein trafficking from the dendritic recycling endosomes to the plasma membrane and controlling both structural and functional plasticity at excitatory synapses. In hippocampal pyramidal neurons, recruits KCNK2/TREK-1 channel at postsynaptic dense bodies microdomains and converts it to a leak channel no longer sensitive to stimulation by arachidonic acid, acidic pH or mechanical stress, nor inhibited by Gq-coupled receptors but still under the negative control of Gs-coupled receptors. Associates with ORAI1 pore-forming subunit of CRAC channels in Ca(2+) signaling microdomains where it recruits NFATC2/NFAT1 and couples store-operated Ca(2+) influx to calmodulin and calcineurin signaling and activation of NFAT-dependent transcriptional responses. In Mus musculus (Mouse), this protein is A-kinase anchor protein 5 (Akap5).